The following is a 308-amino-acid chain: Protein translocase subunit SecF (308 aa).

The next 6 helical transmembrane spans lie at 28–48 (SIIL…NFGI), 140–160 (IEAG…YIWV), 164–184 (WYFG…ALGF), 194–214 (LSTI…SVVI), 246–266 (ILTV…GGEA), and 272–292 (VLVF…SAPI).

The protein belongs to the SecD/SecF family. SecF subfamily. Forms a complex with SecD. Part of the essential Sec protein translocation apparatus which comprises SecA, SecYEG and auxiliary proteins SecDF-YajC and YidC.

It is found in the cell inner membrane. Functionally, part of the Sec protein translocase complex. Interacts with the SecYEG preprotein conducting channel. SecDF uses the proton motive force (PMF) to complete protein translocation after the ATP-dependent function of SecA. The sequence is that of Protein translocase subunit SecF from Rickettsia conorii (strain ATCC VR-613 / Malish 7).